The chain runs to 62 residues: uncharacterized protein (62 aa).

The protein resides in the plastid. Its subcellular location is the chloroplast. This is an uncharacterized protein from Guillardia theta (Cryptophyte).